We begin with the raw amino-acid sequence, 434 residues long: UDP-glucose 6-dehydrogenase (434 aa).

NAD(+) contacts are provided by residues 2 to 19, Val11, Asp30, Lys35, Thr121, and Glu152; that span reads NITFIGSGYVGLVSGIIM. Substrate contacts are provided by residues 148–152, Lys204, Asn208, 249–253, and Gly257; these read EFLRE and FLNAG. The active-site Nucleophile is the Cys260. Lys263 contributes to the NAD(+) binding site. Substrate is bound at residue Lys321. Residue Arg328 participates in NAD(+) binding.

The protein belongs to the UDP-glucose/GDP-mannose dehydrogenase family.

The enzyme catalyses UDP-alpha-D-glucose + 2 NAD(+) + H2O = UDP-alpha-D-glucuronate + 2 NADH + 3 H(+). It functions in the pathway nucleotide-sugar biosynthesis; UDP-alpha-D-glucuronate biosynthesis; UDP-alpha-D-glucuronate from UDP-alpha-D-glucose: step 1/1. The chain is UDP-glucose 6-dehydrogenase (udg) from Rickettsia prowazekii (strain Madrid E).